Consider the following 897-residue polypeptide: 4-hydroxyphenylacetate decarboxylase glycyl radical subunit (897 aa).

The PFL domain maps to 35 to 770 (ESTQKLMDIY…VTLATADGRL (736 aa)). Residues S344 and C503 each contribute to the 4-hydroxyphenylacetate site. The active-site Cysteine radical intermediate is the C503. The active-site Proton donor is E505. Positions 536 and 637 each coordinate 4-hydroxyphenylacetate. One can recognise a Glycine radical domain in the interval 778–897 (GSVSAAAGTD…EVIYRTEYDK (120 aa)). G873 carries the post-translational modification Glycine radical.

Belongs to the glycyl radical enzyme (GRE) family. HPAD subfamily. As to quaternary structure, heterooctamer consisting of 4 large (HpdB) subunits and 4 small (HpdC) subunits, arranged as a tetramer of heterodimers. Also forms a catalytically inactive homodimer. In terms of processing, requires the activating protein CsdA to generate the key active site glycyl radical that is involved in catalysis. Phosphorylated on serine. Phosphorylation may trigger the formation of the active heterooctamers and thereby regulates enzyme activity.

The catalysed reaction is 4-hydroxyphenylacetate + H(+) = 4-methylphenol + CO2. It carries out the reaction 3,4-dihydroxyphenylacetate + H(+) = 4-methylcatechol + CO2. Glycyl radical subunit of the HPA decarboxylase that decarboxylates phenylacetates with a hydroxyl group in the p-position. Active toward 4-hydroxyphenylacetate and 3,4-dihydroxyphenylacetate, forming 4-methylphenol and 4-methylcatechol, respectively. Is likely involved in the catabolism of aromatic amino acids such as tyrosine fermentation. 4-methylphenol (p-cresol) formation provides metabolic toxicity, which allows an active suppression of other microbes and may provide growth advantages for the producers in highly competitive environments. The large subunit is the catalytic subunit that binds the substrate. The polypeptide is 4-hydroxyphenylacetate decarboxylase glycyl radical subunit (Clostridium scatologenes).